The sequence spans 1364 residues: Kinectin (1364 aa).

The Cytoplasmic segment spans residues 1-6; sequence MEFYES. A helical; Signal-anchor for type II membrane protein membrane pass occupies residues 7-29; sequence TYFIILIPSVVITVIFLFFWLFM. The Lumenal portion of the chain corresponds to 30 to 1364; it reads KETLYDEVLA…KGREHYQLVE (1335 aa). Composition is skewed to basic and acidic residues over residues 46 to 56, 73 to 86, 121 to 135, and 170 to 179; these read KFPPTKSDKKK, HESD…DFKL, QKAA…ESEG, and QKNDDQDTKT. Positions 46 to 207 are disordered; the sequence is KFPPTKSDKK…VKQENVSGKK (162 aa). N202, N267, N623, N638, N704, N775, N976, N1061, N1088, and N1094 each carry an N-linked (GlcNAc...) asparagine glycan. The stretch at 315–1085 forms a coiled coil; it reads KASKAESAAA…VETRELLQKL (771 aa). Residues 1116 to 1306 adopt a coiled-coil conformation; sequence SGSEDIKVME…ASLEREIGKV (191 aa).

Belongs to the kinectin family. In terms of assembly, parallel homodimers formed between the membrane-bound and the cytosolic form, and also between 2 cytosolic forms. Post-translationally, both the membrane and cytoplasmic forms seem to be myristoylated.

It is found in the endoplasmic reticulum membrane. Its function is as follows. Receptor for kinesin thus involved in kinesin-driven vesicle motility. The polypeptide is Kinectin (KTN1) (Gallus gallus (Chicken)).